A 575-amino-acid chain; its full sequence is Sulfite reductase [NADPH] hemoprotein beta-component (575 aa).

Residues Cys440, Cys446, Cys485, and Cys489 each coordinate [4Fe-4S] cluster. A siroheme-binding site is contributed by Cys489.

It belongs to the nitrite and sulfite reductase 4Fe-4S domain family. In terms of assembly, alpha(8)-beta(8). The alpha component is a flavoprotein, the beta component is a hemoprotein. Requires siroheme as cofactor. It depends on [4Fe-4S] cluster as a cofactor.

The catalysed reaction is hydrogen sulfide + 3 NADP(+) + 3 H2O = sulfite + 3 NADPH + 4 H(+). It functions in the pathway sulfur metabolism; hydrogen sulfide biosynthesis; hydrogen sulfide from sulfite (NADPH route): step 1/1. In terms of biological role, component of the sulfite reductase complex that catalyzes the 6-electron reduction of sulfite to sulfide. This is one of several activities required for the biosynthesis of L-cysteine from sulfate. The polypeptide is Sulfite reductase [NADPH] hemoprotein beta-component (Chromohalobacter salexigens (strain ATCC BAA-138 / DSM 3043 / CIP 106854 / NCIMB 13768 / 1H11)).